A 121-amino-acid chain; its full sequence is Large ribosomal subunit protein bL20 (121 aa).

The protein belongs to the bacterial ribosomal protein bL20 family.

Binds directly to 23S ribosomal RNA and is necessary for the in vitro assembly process of the 50S ribosomal subunit. It is not involved in the protein synthesizing functions of that subunit. In Wolbachia sp. subsp. Drosophila simulans (strain wRi), this protein is Large ribosomal subunit protein bL20.